The chain runs to 196 residues: MVDNRRTFTAPQSLLETNLTFPNDEPSLTTITVTRERCVDPSLIDSFLRFLRHGSDDIIRQKLNNYRKGSINGKNKCKEFLKQELYPNWQIRNNIISFCEKEAAEMKNETDQQCGNNKKTTAEPLIDARIDPYAARERAEKQEAQYKDWTKVTEWVANNRKIEQILTSTTEGILRQNCEQNNDYLKEFTQFCKDNS.

The short motif at 99 to 114 (CEKEAAEMKNETDQQC) is the Cx14C motif element. Residues 178-192 (CEQNNDYLKEFTQFC) carry the Cx13C motif motif.

The protein belongs to the MIX23 family.

The protein localises to the mitochondrion intermembrane space. Functionally, regulator of the mitochondrial protein import machinery that is localized in the mitochondrial intermembrane space (IMS) and facilitates the transport of proteins from the cytosol into the mitochondrial matrix. Not essential for mitochondrial protein import but induced and required when mitochondrial import is compromised. Stimulates or stabilizes the translocation into the mitochondria of proteins such as OXA1, ATP1 and COX12. The sequence is that of Mitochondrial intermembrane space cysteine motif-containing protein MIX23 from Saccharomyces cerevisiae (strain ATCC 204508 / S288c) (Baker's yeast).